A 631-amino-acid chain; its full sequence is tRNA uridine 5-carboxymethylaminomethyl modification enzyme MnmG (631 aa).

Residue 15-20 (GAGHAG) coordinates FAD. The interval 214 to 233 (YSKTEEEPGDKEPRHFSFTS) is disordered. 276 to 290 (GPRYCPSIETKVVRF) is an NAD(+) binding site.

This sequence belongs to the MnmG family. As to quaternary structure, homodimer. Heterotetramer of two MnmE and two MnmG subunits. Requires FAD as cofactor.

The protein resides in the cytoplasm. In terms of biological role, NAD-binding protein involved in the addition of a carboxymethylaminomethyl (cmnm) group at the wobble position (U34) of certain tRNAs, forming tRNA-cmnm(5)s(2)U34. The polypeptide is tRNA uridine 5-carboxymethylaminomethyl modification enzyme MnmG (Lactobacillus delbrueckii subsp. bulgaricus (strain ATCC 11842 / DSM 20081 / BCRC 10696 / JCM 1002 / NBRC 13953 / NCIMB 11778 / NCTC 12712 / WDCM 00102 / Lb 14)).